The primary structure comprises 291 residues: ATP synthase subunit a (291 aa).

Helical transmembrane passes span 50–70 (LDSM…FWIV), 108–128 (IAPL…MDLI), 161–181 (DPNI…FYSI), 203–223 (PVAK…TFLA), 241–261 (LIFI…SVPW), and 262–282 (AIFH…LTIV).

Belongs to the ATPase A chain family. In terms of assembly, F-type ATPases have 2 components, CF(1) - the catalytic core - and CF(0) - the membrane proton channel. CF(1) has five subunits: alpha(3), beta(3), gamma(1), delta(1), epsilon(1). CF(0) has three main subunits: a(1), b(2) and c(9-12). The alpha and beta chains form an alternating ring which encloses part of the gamma chain. CF(1) is attached to CF(0) by a central stalk formed by the gamma and epsilon chains, while a peripheral stalk is formed by the delta and b chains.

The protein resides in the cell inner membrane. Its function is as follows. Key component of the proton channel; it plays a direct role in the translocation of protons across the membrane. This is ATP synthase subunit a from Acinetobacter baumannii (strain SDF).